We begin with the raw amino-acid sequence, 297 residues long: MSEAEQLIAKADKKCAPVSGFASFFSGSGSYRFEEAADLYTQAANLYRIQRKSNKAGHVFEKAADAQIKADSKDEAANSLIEAYKCYKLDAPSDAARCLNKAVEFFALKGQFRRGANFKAELAELYETKMADPKHAILAYEEAGEWYRGDSAEALANKCYVKAADLSCSDEVQDFLKAAESYERIAKESLNNSLAKWSLKDYFFKAILCRLALNDYPSASALLERFVSWDPTFEKTREYEFALKLVDGLKEGDPDIIASASHEYDQISRLDNFKVKILNKIKNNIRDSDDLAEDDLT.

This sequence belongs to the SNAP family.

It localises to the membrane. Required for vesicular transport between the endoplasmic reticulum and the Golgi apparatus. This chain is Vesicular-fusion protein SEC17 (SEC17), found in Komagataella phaffii (strain GS115 / ATCC 20864) (Yeast).